Reading from the N-terminus, the 166-residue chain is Co-chaperone protein HscB homolog (166 aa).

The J domain occupies 3-75 (QYFTLFRIEP…IDRAAYLLKT (73 aa)).

The protein belongs to the HscB family. Interacts with HscA and stimulates its ATPase activity.

In terms of biological role, co-chaperone involved in the maturation of iron-sulfur cluster-containing proteins. Seems to help targeting proteins to be folded toward HscA. This Neisseria meningitidis serogroup A / serotype 4A (strain DSM 15465 / Z2491) protein is Co-chaperone protein HscB homolog.